The primary structure comprises 445 residues: MREILHIQGGQCGNQIGAKFWEVICDEHGIDHTGKYAGDSDLQLERINVYYNEASGGRFVPRAVLMDLEPGTMDSVRSGPFGQIFRPDNFVFGQSGAGNNWAKGHYTEGAELIDSVLDVVRKEAENCDCLQGFQVCHSLGGGTGSGMGTLLISKIREEYPDRMMLTFSVFPSPKVSDTVVEPYNATLSVHQLVENADECMVLDNEALYDICFRTLKLATPTFGDLNHLISATMSGVTCCLRFPGQLNSDLRKLAVNLIPFPRLHFFMVGFAPLTSRGSQQYRALTVPELTQQMWDSKNMMCAADPRHGRYLTASAMFRGKMSTKEVDEQMLNVQNKNSSYFVEWIPNNVKSSVCDIPPNGLKMASTFIGNSTSIQEMFRRVSEQFTAMFRRKAFLHWYTGEGMDEMEFTEAESNMNDLVAEYQQYQDATAEDEEEYEDEEEEMAA.

8 residues coordinate GTP: Q11, E69, S138, G142, T143, G144, N204, and N226. E69 contacts Mg(2+). A disordered region spans residues 426-445; it reads QDATAEDEEEYEDEEEEMAA. Acidic residues predominate over residues 429–445; it reads TAEDEEEYEDEEEEMAA.

This sequence belongs to the tubulin family. In terms of assembly, dimer of alpha and beta chains. A typical microtubule is a hollow water-filled tube with an outer diameter of 25 nm and an inner diameter of 15 nM. Alpha-beta heterodimers associate head-to-tail to form protofilaments running lengthwise along the microtubule wall with the beta-tubulin subunit facing the microtubule plus end conferring a structural polarity. Microtubules usually have 13 protofilaments but different protofilament numbers can be found in some organisms and specialized cells. Mg(2+) is required as a cofactor.

It localises to the cytoplasm. The protein localises to the cytoskeleton. Its function is as follows. Tubulin is the major constituent of microtubules, a cylinder consisting of laterally associated linear protofilaments composed of alpha- and beta-tubulin heterodimers. Microtubules grow by the addition of GTP-tubulin dimers to the microtubule end, where a stabilizing cap forms. Below the cap, tubulin dimers are in GDP-bound state, owing to GTPase activity of alpha-tubulin. This Eleusine indica (Goosegrass) protein is Tubulin beta-1 chain (TUBB1).